The chain runs to 91 residues: MQPTRVLFKRSVWKGPHIVPLPIQRPEPGKKIAPIRTQARSATILPNFVGLKFQVHNGKDYIDLTVTEEMVGHKLGEFSATRKPFIWGKKK.

This sequence belongs to the universal ribosomal protein uS19 family. Component of the mitochondrial small ribosomal subunit (mt-SSU). Mature N.crassa 74S mitochondrial ribosomes consist of a small (37S) and a large (54S) subunit. The 37S small subunit contains a 16S ribosomal RNA (16S mt-rRNA) and 32 different proteins. The 54S large subunit contains a 23S rRNA (23S mt-rRNA) and 42 different proteins.

It is found in the mitochondrion. In terms of biological role, component of the mitochondrial ribosome (mitoribosome), a dedicated translation machinery responsible for the synthesis of mitochondrial genome-encoded proteins, including at least some of the essential transmembrane subunits of the mitochondrial respiratory chain. The mitoribosomes are attached to the mitochondrial inner membrane and translation products are cotranslationally integrated into the membrane. In Neurospora crassa (strain ATCC 24698 / 74-OR23-1A / CBS 708.71 / DSM 1257 / FGSC 987), this protein is Small ribosomal subunit protein uS19m (rsm19).